The sequence spans 306 residues: ATP-dependent (S)-NAD(P)H-hydrate dehydratase (306 aa).

The YjeF C-terminal domain occupies 4 to 300; that stretch reads LIDLFKPMIP…NQISNGFEDL (297 aa). (6S)-NADPHX is bound by residues G104 and 157–163; that span reads NFVEFKS. ATP contacts are provided by residues 197 to 201 and 216 to 225; these read KGKED and GMPRRCGGQG. D226 is a binding site for (6S)-NADPHX.

Belongs to the NnrD/CARKD family. Mg(2+) is required as a cofactor.

The enzyme catalyses (6S)-NADHX + ATP = ADP + phosphate + NADH + H(+). It catalyses the reaction (6S)-NADPHX + ATP = ADP + phosphate + NADPH + H(+). Functionally, catalyzes the dehydration of the S-form of NAD(P)HX at the expense of ATP, which is converted to ADP. Together with NAD(P)HX epimerase, which catalyzes the epimerization of the S- and R-forms, the enzyme allows the repair of both epimers of NAD(P)HX, a damaged form of NAD(P)H that is a result of enzymatic or heat-dependent hydration. This is ATP-dependent (S)-NAD(P)H-hydrate dehydratase from Dictyostelium discoideum (Social amoeba).